Consider the following 1115-residue polypeptide: Carbamoyl phosphate synthase large chain (1115 aa).

The carboxyphosphate synthetic domain stretch occupies residues 1–407 (MPRRTDLHHV…ALGKVMRSLE (407 aa)). ATP contacts are provided by R134, R174, G180, G181, E213, I215, E220, G246, V247, H248, Q290, and E304. The 196-residue stretch at 138 to 333 (KDIVAKAGGE…IAKIAAKLAI (196 aa)) folds into the ATP-grasp 1 domain. Mg(2+)-binding residues include Q290, E304, and N306. Mn(2+) is bound by residues Q290, E304, and N306. The oligomerization domain stretch occupies residues 408–559 (TTRAGFWTAP…ELDPAAETEV (152 aa)). The interval 560–965 (APQTERPKVL…AFAKSQTAAY (406 aa)) is carbamoyl phosphate synthetic domain. Positions 693–884 (GDLLSAAGLP…LAKACARIML (192 aa)) constitute an ATP-grasp 2 domain. Residues R729, R768, L770, E775, G800, I801, H802, S803, Q843, and E855 each contribute to the ATP site. Mg(2+)-binding residues include Q843, E855, and N857. The Mn(2+) site is built by Q843, E855, and N857. One can recognise an MGS-like domain in the interval 966 to 1113 (GSLPAQGTVF…QELHRVIGGV (148 aa)). The allosteric domain stretch occupies residues 966–1115 (GSLPAQGTVF…LHRVIGGVER (150 aa)).

It belongs to the CarB family. Composed of two chains; the small (or glutamine) chain promotes the hydrolysis of glutamine to ammonia, which is used by the large (or ammonia) chain to synthesize carbamoyl phosphate. Tetramer of heterodimers (alpha,beta)4. The cofactor is Mg(2+). Mn(2+) is required as a cofactor.

It carries out the reaction hydrogencarbonate + L-glutamine + 2 ATP + H2O = carbamoyl phosphate + L-glutamate + 2 ADP + phosphate + 2 H(+). The enzyme catalyses hydrogencarbonate + NH4(+) + 2 ATP = carbamoyl phosphate + 2 ADP + phosphate + 2 H(+). The protein operates within amino-acid biosynthesis; L-arginine biosynthesis; carbamoyl phosphate from bicarbonate: step 1/1. It functions in the pathway pyrimidine metabolism; UMP biosynthesis via de novo pathway; (S)-dihydroorotate from bicarbonate: step 1/3. Functionally, large subunit of the glutamine-dependent carbamoyl phosphate synthetase (CPSase). CPSase catalyzes the formation of carbamoyl phosphate from the ammonia moiety of glutamine, carbonate, and phosphate donated by ATP, constituting the first step of 2 biosynthetic pathways, one leading to arginine and/or urea and the other to pyrimidine nucleotides. The large subunit (synthetase) binds the substrates ammonia (free or transferred from glutamine from the small subunit), hydrogencarbonate and ATP and carries out an ATP-coupled ligase reaction, activating hydrogencarbonate by forming carboxy phosphate which reacts with ammonia to form carbamoyl phosphate. The polypeptide is Carbamoyl phosphate synthase large chain (Mycobacterium tuberculosis (strain CDC 1551 / Oshkosh)).